The following is a 443-amino-acid chain: Autophagy-related protein 13 homolog (443 aa).

2 disordered regions span residues 232 to 283 and 308 to 333; these read AKKR…EEDH and ANGT…KEPT. Positions 240–253 are enriched in polar residues; the sequence is SVESATSAGSSTSR. Positions 268–283 are enriched in basic and acidic residues; sequence EDSRHSDVQNSYEEDH. A compositionally biased stretch (polar residues) spans 308-325; sequence ANGTKKNSSSTCLNSPKS.

The protein belongs to the ATG13 family. Metazoan subfamily. Interacts with unc-51 (via C-terminus). Interacts with lgg-1; the interaction is direct.

It localises to the cytoplasm. Its subcellular location is the cytosol. The protein localises to the preautophagosomal structure. It is found in the perikaryon. The protein resides in the cell projection. It localises to the axon. Functionally, component of the unc-51/atg-13 complex required for autophagosome formation. Required for the degradation of germ cell specific P-granule components such as sepa-1 by autophagy in somatic cells. This ensures exclusive localization of the P-granules in germ cells. May function downstream of the let-363 (Tor) signaling pathway to mediate sepa-1 degradation. Plays a role in survival during limited food availability. The sequence is that of Autophagy-related protein 13 homolog from Caenorhabditis elegans.